Reading from the N-terminus, the 1154-residue chain is DNA-directed RNA polymerase, mitochondrial (1154 aa).

The N-terminal 30 residues, 1–30 (MLRRKIQTYLSRSHIRRGLCGLRFFQTQRL), are a transit peptide targeting the mitochondrion. Residues 221–243 (ESENGKDQNGDSSLKEKQPDVET) are disordered. Residues 223–240 (ENGKDQNGDSSLKEKQPD) are compositionally biased toward basic and acidic residues. Residues Asp-821, Lys-890, and Asp-1061 contribute to the active site.

This sequence belongs to the phage and mitochondrial RNA polymerase family.

The protein localises to the mitochondrion. The catalysed reaction is RNA(n) + a ribonucleoside 5'-triphosphate = RNA(n+1) + diphosphate. DNA-dependent RNA polymerase catalyzes the transcription of DNA into RNA using the four ribonucleoside triphosphates as substrates. Combines in the mitochondrion with mitochondrial transcription factor mtf1 as a holoenzyme to recognize and initiate transcription at the core mitochondrial promoters. The protein is DNA-directed RNA polymerase, mitochondrial (rpo41) of Schizosaccharomyces pombe (strain 972 / ATCC 24843) (Fission yeast).